The primary structure comprises 299 residues: Lathosterol oxidase (299 aa).

Helical transmembrane passes span 32-52 (ISLLIVTNLGAYILYFFCATL), 79-99 (FTVKSLPWISIPTVSLFLLEL), and 117-137 (IHLMVSVVSFLFFTDMLIYWI). Residues 124-252 (VSFLFFTDML…YFTLWDRIGG (129 aa)) form the Fatty acid hydroxylase domain. A Histidine box-1 motif is present at residues 138–143 (HRGLHH). Residues 151–155 (HKPHH) carry the Histidine box-2 motif. A helical transmembrane segment spans residues 186–206 (VFPLHKVVYLGLYVLVNVWTI). The Histidine box-3 motif lies at 228-233 (HHTDHH). Ser-253 carries the post-translational modification Phosphoserine. Residues 280 to 299 (FAENGCKGKKVGNGEFTKNK) form a disordered region.

This sequence belongs to the sterol desaturase family. Requires Fe cation as cofactor.

Its subcellular location is the endoplasmic reticulum membrane. The enzyme catalyses a Delta(7)-sterol + 2 Fe(II)-[cytochrome b5] + O2 + 2 H(+) = a Delta(5),Delta(7)-sterol + 2 Fe(III)-[cytochrome b5] + 2 H2O. It carries out the reaction lathosterol + 2 Fe(II)-[cytochrome b5] + O2 + 2 H(+) = 7-dehydrocholesterol + 2 Fe(III)-[cytochrome b5] + 2 H2O. The catalysed reaction is 5alpha-cholesta-7,24-dien-3beta-ol + 2 Fe(II)-[cytochrome b5] + O2 + 2 H(+) = 7-dehydrodesmosterol + 2 Fe(III)-[cytochrome b5] + 2 H2O. The protein operates within steroid biosynthesis; cholesterol biosynthesis. Catalyzes the penultimate step of the biosynthesis of cholesterol, the dehydrogenation of lathosterol into 7-dehydrocholesterol (7-DHC). Cholesterol is the major sterol component in mammalian membranes and a precursor for bile acid and steroid hormone synthesis. In addition to its essential role in cholesterol biosynthesis, it also indirectly regulates ferroptosis through the production of 7-DHC. By diverting the spread of damage caused by peroxyl radicals from the phospholipid components to its sterol nucleus, 7-DHC prevents this form of cell death. The sequence is that of Lathosterol oxidase from Mus musculus (Mouse).